We begin with the raw amino-acid sequence, 134 residues long: Ribosome-binding factor A (134 aa).

It belongs to the RbfA family. As to quaternary structure, monomer. Binds 30S ribosomal subunits, but not 50S ribosomal subunits or 70S ribosomes.

It localises to the cytoplasm. In terms of biological role, one of several proteins that assist in the late maturation steps of the functional core of the 30S ribosomal subunit. Associates with free 30S ribosomal subunits (but not with 30S subunits that are part of 70S ribosomes or polysomes). Required for efficient processing of 16S rRNA. May interact with the 5'-terminal helix region of 16S rRNA. This Rhizobium leguminosarum bv. trifolii (strain WSM2304) protein is Ribosome-binding factor A.